A 152-amino-acid polypeptide reads, in one-letter code: Ribosome maturation factor RimP (152 aa).

This sequence belongs to the RimP family.

It is found in the cytoplasm. Functionally, required for maturation of 30S ribosomal subunits. The polypeptide is Ribosome maturation factor RimP (Stutzerimonas stutzeri (strain A1501) (Pseudomonas stutzeri)).